The primary structure comprises 84 residues: Small ribosomal subunit protein bS16 (84 aa).

The protein belongs to the bacterial ribosomal protein bS16 family.

This chain is Small ribosomal subunit protein bS16, found in Thioalkalivibrio sulfidiphilus (strain HL-EbGR7).